The primary structure comprises 413 residues: Porin PorA (413 aa).

A signal peptide spans 1 to 22 (MKKVVSSLLIILGAAMLIFAIA). Residues 265–288 (TKSAADSKDDKKKDGDKKDEKSPE) form a disordered region.

It belongs to the PorA family.

The protein resides in the secreted. It localises to the cell wall. Functionally, forms water-filled channels that favor the permeation of cations. The sequence is that of Porin PorA from Corynebacterium resistens (strain DSM 45100 / JCM 12819 / GTC 2026 / SICGH 158).